We begin with the raw amino-acid sequence, 464 residues long: Protein FAM90A10 (464 aa).

Disordered regions lie at residues 1–42 (MMAR…DPRL), 69–373 (VPAT…LPTA), and 415–437 (HSPEKPGAFLAQSPHVSEKSEAP). Basic and acidic residues-rich tracts occupy residues 74-89 (GKKEGKENLKPWKPRG) and 97-114 (NKDKGEKEERPRQQDPQR). Over residues 180-197 (LASLSPLRKASLSSSSSL) the composition is skewed to low complexity.

It belongs to the FAM90 family.

In Homo sapiens (Human), this protein is Protein FAM90A10 (FAM90A10).